We begin with the raw amino-acid sequence, 199 residues long: Cytochrome c-type cyt cy (199 aa).

The chain crosses the membrane as a helical span at residues 7–27 (ITKIGVTLFAVALFYGFIYML). Over residues 69-80 (AAETAEAAAPAE) the composition is skewed to low complexity. Positions 69–93 (AAETAEAAAPAEPAAPPPPAYVEVD) are disordered. Residues C112, C115, H116, and M148 each coordinate heme c.

In terms of processing, binds 1 heme c group covalently per subunit.

The protein localises to the cell membrane. Electron transfer pathways that operates during photosynthesis. This chain is Cytochrome c-type cyt cy (cycY), found in Rhodobacter capsulatus (strain ATCC BAA-309 / NBRC 16581 / SB1003).